Reading from the N-terminus, the 202-residue chain is uncharacterized protein (202 aa).

This is an uncharacterized protein from Homo sapiens (Human).